Reading from the N-terminus, the 539-residue chain is 2,3-bisphosphoglycerate-independent phosphoglycerate mutase (539 aa).

Asp-37 and Ser-86 together coordinate Mn(2+). Residue Ser-86 is part of the active site. Residues His-147, 177–178, Arg-210, Arg-216, 284–287, and Lys-359 each bind substrate; these read RD and RADR. Mn(2+) is bound by residues Asp-426, His-430, Asp-467, His-468, and His-485.

Belongs to the BPG-independent phosphoglycerate mutase family. It depends on Mg(2+) as a cofactor. The cofactor is Mn(2+). Expressed ubiquitously. High expression levels in the nerve ring region, intestine and body wall muscles.

The enzyme catalyses (2R)-2-phosphoglycerate = (2R)-3-phosphoglycerate. Its pathway is carbohydrate degradation; glycolysis; pyruvate from D-glyceraldehyde 3-phosphate: step 3/5. Activity is not affected by 2,3-bisphosphoglycerate. Its function is as follows. Catalyzes the interconversion of 2-phosphoglycerate and 3-phosphoglycerate. This is 2,3-bisphosphoglycerate-independent phosphoglycerate mutase from Caenorhabditis elegans.